The following is a 967-amino-acid chain: Leucine--tRNA ligase (967 aa).

The short motif at proline 43 to histidine 53 is the 'HIGH' region element. The 'KMSKS' region motif lies at lysine 650 to serine 654. ATP is bound at residue lysine 653.

It belongs to the class-I aminoacyl-tRNA synthetase family.

It is found in the cytoplasm. The catalysed reaction is tRNA(Leu) + L-leucine + ATP = L-leucyl-tRNA(Leu) + AMP + diphosphate. The polypeptide is Leucine--tRNA ligase (Thermococcus onnurineus (strain NA1)).